Here is a 457-residue protein sequence, read N- to C-terminus: 6-phosphofructo-2-kinase/fructose-2,6-bisphosphatase (457 aa).

The interval 1-20 (MEIPPGLETTKRKVAHSDEH) is disordered. The interval 1 to 244 (MEIPPGLETT…VYFLMNIHLL (244 aa)) is 6-phosphofructo-2-kinase. The segment covering 9–20 (TTKRKVAHSDEH) has biased composition (basic and acidic residues). 36-44 (GLPARGKTY) provides a ligand contact to ATP. Beta-D-fructose 6-phosphate-binding residues include R69 and R98. D124 is a catalytic residue. Residues T126 and R132 each contribute to the beta-D-fructose 6-phosphate site. The active site involves C154. Residue 163–168 (NVTDVK) participates in ATP binding. 3 residues coordinate beta-D-fructose 6-phosphate: K168, R190, and Y194. The segment at 245 to 457 (PRSIYLTRHG…QLPLCDSPRD (213 aa)) is fructose-2,6-bisphosphatase. Residue R252 coordinates beta-D-fructose 2,6-bisphosphate. H253 acts as the Tele-phosphohistidine intermediate in catalysis. 2 residues coordinate beta-D-fructose 2,6-bisphosphate: N259 and G265. E324 serves as the catalytic Proton donor/acceptor. Y335, R349, K353, Y364, Q390, and R394 together coordinate beta-D-fructose 2,6-bisphosphate. Residue 346–349 (ADDR) participates in ATP binding. ATP contacts are provided by residues 390–394 (QAVLR) and Y426.

It in the C-terminal section; belongs to the phosphoglycerate mutase family.

The catalysed reaction is beta-D-fructose 2,6-bisphosphate + H2O = beta-D-fructose 6-phosphate + phosphate. The enzyme catalyses beta-D-fructose 6-phosphate + ATP = beta-D-fructose 2,6-bisphosphate + ADP + H(+). Its function is as follows. Synthesis and degradation of fructose 2,6-bisphosphate. This Caenorhabditis elegans protein is 6-phosphofructo-2-kinase/fructose-2,6-bisphosphatase.